We begin with the raw amino-acid sequence, 1406 residues long: DNA-directed RNA polymerase subunit beta' (1406 aa).

Residues C70, C72, C85, and C88 each coordinate Zn(2+). Mg(2+)-binding residues include D460, D462, and D464. Residues C814, C888, C895, and C898 each coordinate Zn(2+).

Belongs to the RNA polymerase beta' chain family. As to quaternary structure, the RNAP catalytic core consists of 2 alpha, 1 beta, 1 beta' and 1 omega subunit. When a sigma factor is associated with the core the holoenzyme is formed, which can initiate transcription. The cofactor is Mg(2+). Zn(2+) serves as cofactor.

It catalyses the reaction RNA(n) + a ribonucleoside 5'-triphosphate = RNA(n+1) + diphosphate. DNA-dependent RNA polymerase catalyzes the transcription of DNA into RNA using the four ribonucleoside triphosphates as substrates. The chain is DNA-directed RNA polymerase subunit beta' from Sodalis glossinidius (strain morsitans).